The sequence spans 340 residues: Fructose-1,6-bisphosphatase, cytosolic (340 aa).

The Mg(2+) site is built by Glu71, Glu100, Asp121, Leu123, and Asp124. Substrate is bound by residues 124-127 (DGSS), Asn215, Tyr247, Tyr267, and Lys277. Glu283 is a binding site for Mg(2+).

The protein belongs to the FBPase class 1 family. The cofactor is Mg(2+).

Its subcellular location is the cytoplasm. It catalyses the reaction beta-D-fructose 1,6-bisphosphate + H2O = beta-D-fructose 6-phosphate + phosphate. This is Fructose-1,6-bisphosphatase, cytosolic from Solanum tuberosum (Potato).